Reading from the N-terminus, the 174-residue chain is Crossover junction endodeoxyribonuclease RuvC (174 aa).

Catalysis depends on residues aspartate 8, glutamate 68, and aspartate 140. Aspartate 8, glutamate 68, and aspartate 140 together coordinate Mg(2+).

This sequence belongs to the RuvC family. As to quaternary structure, homodimer which binds Holliday junction (HJ) DNA. The HJ becomes 2-fold symmetrical on binding to RuvC with unstacked arms; it has a different conformation from HJ DNA in complex with RuvA. In the full resolvosome a probable DNA-RuvA(4)-RuvB(12)-RuvC(2) complex forms which resolves the HJ. Mg(2+) serves as cofactor.

The protein localises to the cytoplasm. It carries out the reaction Endonucleolytic cleavage at a junction such as a reciprocal single-stranded crossover between two homologous DNA duplexes (Holliday junction).. Its function is as follows. The RuvA-RuvB-RuvC complex processes Holliday junction (HJ) DNA during genetic recombination and DNA repair. Endonuclease that resolves HJ intermediates. Cleaves cruciform DNA by making single-stranded nicks across the HJ at symmetrical positions within the homologous arms, yielding a 5'-phosphate and a 3'-hydroxyl group; requires a central core of homology in the junction. The consensus cleavage sequence is 5'-(A/T)TT(C/G)-3'. Cleavage occurs on the 3'-side of the TT dinucleotide at the point of strand exchange. HJ branch migration catalyzed by RuvA-RuvB allows RuvC to scan DNA until it finds its consensus sequence, where it cleaves and resolves the cruciform DNA. The protein is Crossover junction endodeoxyribonuclease RuvC of Legionella pneumophila (strain Corby).